The following is a 317-amino-acid chain: Dehydrogenase/reductase SDR family member 12 (317 aa).

Positions 50 and 52 each coordinate NAD(+). Serine 175 serves as a coordination point for substrate. Residues tyrosine 201, lysine 205, and threonine 234 each coordinate NAD(+). Residue tyrosine 201 is the Proton acceptor of the active site.

Belongs to the short-chain dehydrogenases/reductases (SDR) family.

In terms of biological role, putative oxidoreductase. This Homo sapiens (Human) protein is Dehydrogenase/reductase SDR family member 12.